Here is a 628-residue protein sequence, read N- to C-terminus: tRNA uridine 5-carboxymethylaminomethyl modification enzyme MnmG (628 aa).

FAD-binding positions include 14 to 19, Val-126, and Ser-181; that span reads GAGHAG. 273-287 contacts NAD(+); it reads GPRYCPSIEDKVVRF. Gln-370 provides a ligand contact to FAD.

It belongs to the MnmG family. Homodimer. Heterotetramer of two MnmE and two MnmG subunits. FAD is required as a cofactor.

Its subcellular location is the cytoplasm. In terms of biological role, NAD-binding protein involved in the addition of a carboxymethylaminomethyl (cmnm) group at the wobble position (U34) of certain tRNAs, forming tRNA-cmnm(5)s(2)U34. This Exiguobacterium sibiricum (strain DSM 17290 / CCUG 55495 / CIP 109462 / JCM 13490 / 255-15) protein is tRNA uridine 5-carboxymethylaminomethyl modification enzyme MnmG.